The chain runs to 255 residues: Kallikrein-15 (255 aa).

The first 15 residues, 1-15, serve as a signal peptide directing secretion; that stretch reads MWLLLPLSFLLTSTA. Residues 16–20 constitute a propeptide, activation peptide; that stretch reads QDGGK. The serine protease stretch occupies residues 21–253; it reads LLEGEECAPH…YVKWIRETMK (233 aa). C46 and C62 are oxidised to a cystine. Active-site charge relay system residues include H61 and D105. 3 cysteine pairs are disulfide-bonded: C137/C214, C179/C193, and C204/C229. An N-linked (GlcNAc...) asparagine glycan is attached at N170. S208 functions as the Charge relay system in the catalytic mechanism. N-linked (GlcNAc...) asparagine glycosylation occurs at N231.

Belongs to the peptidase S1 family. Kallikrein subfamily.

It localises to the secreted. Functionally, protease whose physiological substrate is not yet known. This Saguinus oedipus (Cotton-top tamarin) protein is Kallikrein-15 (KLK15).